The sequence spans 336 residues: Holliday junction branch migration complex subunit RuvB (336 aa).

The large ATPase domain (RuvB-L) stretch occupies residues 4–184 (ADRLISAGTT…FGIVQRLEFY (181 aa)). ATP is bound by residues Ile-23, Arg-24, Gly-65, Lys-68, Thr-69, Thr-70, 131–133 (EDY), Arg-174, Tyr-184, and Arg-221. Thr-69 is a Mg(2+) binding site. Positions 185–255 (QVPDLQYIVS…IAAQALDMLN (71 aa)) are small ATPAse domain (RuvB-S). Residues 258 to 336 (AEGFDYMDRK…HFGITPPEMP (79 aa)) form a head domain (RuvB-H) region. DNA-binding residues include Arg-294, Arg-313, and Arg-318.

Belongs to the RuvB family. Homohexamer. Forms an RuvA(8)-RuvB(12)-Holliday junction (HJ) complex. HJ DNA is sandwiched between 2 RuvA tetramers; dsDNA enters through RuvA and exits via RuvB. An RuvB hexamer assembles on each DNA strand where it exits the tetramer. Each RuvB hexamer is contacted by two RuvA subunits (via domain III) on 2 adjacent RuvB subunits; this complex drives branch migration. In the full resolvosome a probable DNA-RuvA(4)-RuvB(12)-RuvC(2) complex forms which resolves the HJ.

Its subcellular location is the cytoplasm. The enzyme catalyses ATP + H2O = ADP + phosphate + H(+). The RuvA-RuvB-RuvC complex processes Holliday junction (HJ) DNA during genetic recombination and DNA repair, while the RuvA-RuvB complex plays an important role in the rescue of blocked DNA replication forks via replication fork reversal (RFR). RuvA specifically binds to HJ cruciform DNA, conferring on it an open structure. The RuvB hexamer acts as an ATP-dependent pump, pulling dsDNA into and through the RuvAB complex. RuvB forms 2 homohexamers on either side of HJ DNA bound by 1 or 2 RuvA tetramers; 4 subunits per hexamer contact DNA at a time. Coordinated motions by a converter formed by DNA-disengaged RuvB subunits stimulates ATP hydrolysis and nucleotide exchange. Immobilization of the converter enables RuvB to convert the ATP-contained energy into a lever motion, pulling 2 nucleotides of DNA out of the RuvA tetramer per ATP hydrolyzed, thus driving DNA branch migration. The RuvB motors rotate together with the DNA substrate, which together with the progressing nucleotide cycle form the mechanistic basis for DNA recombination by continuous HJ branch migration. Branch migration allows RuvC to scan DNA until it finds its consensus sequence, where it cleaves and resolves cruciform DNA. This chain is Holliday junction branch migration complex subunit RuvB, found in Shigella boydii serotype 18 (strain CDC 3083-94 / BS512).